A 577-amino-acid chain; its full sequence is Beta-glucosidase 30 (577 aa).

The first 23 residues, 1-23, serve as a signal peptide directing secretion; sequence MAKGSWFFIILFIISMLENMINS. A beta-D-glucoside is bound by residues Gln45, His148, and 193-194; that span reads NE. The active-site Proton donor is Glu194. A disulfide bond links Cys213 and Cys221. A glycan (N-linked (GlcNAc...) asparagine) is linked at Asn328. Residue Tyr338 coordinates a beta-D-glucoside. Residue Asn368 is glycosylated (N-linked (GlcNAc...) asparagine). A beta-D-glucoside contacts are provided by residues Glu410, Trp460, 467 to 468, and Phe476; that span reads EW. Residue Glu410 is the Nucleophile of the active site. 2 N-linked (GlcNAc...) asparagine glycosylation sites follow: Asn524 and Asn544.

It belongs to the glycosyl hydrolase 1 family.

The enzyme catalyses Hydrolysis of terminal, non-reducing beta-D-glucosyl residues with release of beta-D-glucose.. The protein is Beta-glucosidase 30 of Arabidopsis thaliana (Mouse-ear cress).